A 160-amino-acid polypeptide reads, in one-letter code: Nucleotide-binding protein VC_1508 (160 aa).

This sequence belongs to the YajQ family.

Functionally, nucleotide-binding protein. The chain is Nucleotide-binding protein VC_1508 from Vibrio cholerae serotype O1 (strain ATCC 39315 / El Tor Inaba N16961).